We begin with the raw amino-acid sequence, 366 residues long: Ribosomal RNA large subunit methyltransferase M (366 aa).

Residues Ser-188, 221–224 (CPGG), Asp-240, Asp-260, and Asp-277 each bind S-adenosyl-L-methionine. The active-site Proton acceptor is the Lys-306.

The protein belongs to the class I-like SAM-binding methyltransferase superfamily. RNA methyltransferase RlmE family. RlmM subfamily. As to quaternary structure, monomer.

The protein resides in the cytoplasm. The catalysed reaction is cytidine(2498) in 23S rRNA + S-adenosyl-L-methionine = 2'-O-methylcytidine(2498) in 23S rRNA + S-adenosyl-L-homocysteine + H(+). In terms of biological role, catalyzes the 2'-O-methylation at nucleotide C2498 in 23S rRNA. The polypeptide is Ribosomal RNA large subunit methyltransferase M (Musicola paradisiaca (strain Ech703) (Dickeya paradisiaca)).